A 67-amino-acid polypeptide reads, in one-letter code: Conotoxin TsMMSK-011 (67 aa).

The N-terminal stretch at methionine 1 to alanine 20 is a signal peptide. The propeptide occupies valine 21 to valine 50. Cystine bridges form between cysteine 53–cysteine 65, cysteine 54–cysteine 61, and cysteine 58–cysteine 64. 4-hydroxyproline is present on proline 63.

It belongs to the conotoxin M superfamily. In terms of tissue distribution, expressed by the venom duct.

It is found in the secreted. This Conus tessulatus (Tessellate cone) protein is Conotoxin TsMMSK-011.